A 307-amino-acid polypeptide reads, in one-letter code: MAKKKIAISCGDIQGVGLELILKSHKEVSAFCEPLYLIDGELLERANQLLHNAYETKTLNTLAIHSPLPLLNSSTIGKVSAQSGAYSFESFKKACELADDKEVDGVCTLPINKLAWQQAQIPFVGHTDFLKQRYKDHQIIMMLGCSKLFVGLFSDHVPLGAVSQLIQVKELVKFLLAFQKSTQAKIVQVCGFNPHAGEEGLFGEEDEKILKAIQKSNQTLGFECFLGPLPADSAFAPNKRKITPFYVSMSHDVGLAPLKALYFDESINVSLNAPILRASTDHGTAFDIAYQNKANNKSYLNAIKYLA.

Substrate contacts are provided by His126 and Thr127. A divalent metal cation-binding residues include His156, His195, and His251. Positions 259, 268, and 277 each coordinate substrate.

This sequence belongs to the PdxA family. Homodimer. The cofactor is Zn(2+). Mg(2+) serves as cofactor. Co(2+) is required as a cofactor.

Its subcellular location is the cytoplasm. The catalysed reaction is 4-(phosphooxy)-L-threonine + NAD(+) = 3-amino-2-oxopropyl phosphate + CO2 + NADH. It functions in the pathway cofactor biosynthesis; pyridoxine 5'-phosphate biosynthesis; pyridoxine 5'-phosphate from D-erythrose 4-phosphate: step 4/5. Its function is as follows. Catalyzes the NAD(P)-dependent oxidation of 4-(phosphooxy)-L-threonine (HTP) into 2-amino-3-oxo-4-(phosphooxy)butyric acid which spontaneously decarboxylates to form 3-amino-2-oxopropyl phosphate (AHAP). This is 4-hydroxythreonine-4-phosphate dehydrogenase from Helicobacter pylori (strain HPAG1).